The sequence spans 392 residues: Phospho-N-acetylmuramoyl-pentapeptide-transferase (392 aa).

The next 10 helical transmembrane spans lie at 28–48, 74–94, 100–120, 137–157, 193–213, 225–245, 262–282, 289–309, 314–334, and 369–389; these read RALM…PYVI, TPTM…LMWF, FVWI…VDDW, YFWQ…SISE, VSYP…IVGA, GLAI…AYVT, SGEL…FLWF, VFMG…IAVI, IVFF…MAQV, and QVVV…LSTL.

The protein belongs to the glycosyltransferase 4 family. MraY subfamily. Mg(2+) is required as a cofactor.

It localises to the cell inner membrane. The enzyme catalyses UDP-N-acetyl-alpha-D-muramoyl-L-alanyl-gamma-D-glutamyl-meso-2,6-diaminopimeloyl-D-alanyl-D-alanine + di-trans,octa-cis-undecaprenyl phosphate = di-trans,octa-cis-undecaprenyl diphospho-N-acetyl-alpha-D-muramoyl-L-alanyl-D-glutamyl-meso-2,6-diaminopimeloyl-D-alanyl-D-alanine + UMP. Its pathway is cell wall biogenesis; peptidoglycan biosynthesis. Functionally, catalyzes the initial step of the lipid cycle reactions in the biosynthesis of the cell wall peptidoglycan: transfers peptidoglycan precursor phospho-MurNAc-pentapeptide from UDP-MurNAc-pentapeptide onto the lipid carrier undecaprenyl phosphate, yielding undecaprenyl-pyrophosphoryl-MurNAc-pentapeptide, known as lipid I. The sequence is that of Phospho-N-acetylmuramoyl-pentapeptide-transferase from Variovorax paradoxus (strain S110).